The primary structure comprises 492 residues: Ketol-acid reductoisomerase (NADP(+)) (492 aa).

In terms of domain architecture, KARI N-terminal Rossmann spans 14–208; it reads LDQLGKCRFM…GGHRAGVLQS (195 aa). NADP(+) is bound by residues 45-48, Arg-68, Arg-76, Ser-78, and 108-110; these read CGAQ and DKQ. His-132 is an active-site residue. Residue Gly-158 participates in NADP(+) binding. KARI C-terminal knotted domains lie at 209 to 344 and 345 to 485; these read SFVA…NAPQ and FDGK…MKDM. Residues Asp-217, Glu-221, Glu-389, and Glu-393 each coordinate Mg(2+). Position 414 (Ser-414) interacts with substrate.

Belongs to the ketol-acid reductoisomerase family. Requires Mg(2+) as cofactor.

It carries out the reaction (2R)-2,3-dihydroxy-3-methylbutanoate + NADP(+) = (2S)-2-acetolactate + NADPH + H(+). The enzyme catalyses (2R,3R)-2,3-dihydroxy-3-methylpentanoate + NADP(+) = (S)-2-ethyl-2-hydroxy-3-oxobutanoate + NADPH + H(+). Its pathway is amino-acid biosynthesis; L-isoleucine biosynthesis; L-isoleucine from 2-oxobutanoate: step 2/4. The protein operates within amino-acid biosynthesis; L-valine biosynthesis; L-valine from pyruvate: step 2/4. Involved in the biosynthesis of branched-chain amino acids (BCAA). Catalyzes an alkyl-migration followed by a ketol-acid reduction of (S)-2-acetolactate (S2AL) to yield (R)-2,3-dihydroxy-isovalerate. In the isomerase reaction, S2AL is rearranged via a Mg-dependent methyl migration to produce 3-hydroxy-3-methyl-2-ketobutyrate (HMKB). In the reductase reaction, this 2-ketoacid undergoes a metal-dependent reduction by NADPH to yield (R)-2,3-dihydroxy-isovalerate. The polypeptide is Ketol-acid reductoisomerase (NADP(+)) (Pectobacterium carotovorum subsp. carotovorum (strain PC1)).